A 428-amino-acid polypeptide reads, in one-letter code: Monocarboxylate transporter 13 (428 aa).

The Cytoplasmic segment spans residues 1–10; the sequence is MVHRTEPPDG. 12 consecutive transmembrane segments (helical) span residues 11 to 31, 52 to 72, 81 to 101, 106 to 126, 139 to 159, 172 to 192, 221 to 241, 244 to 264, 283 to 303, 309 to 329, 338 to 358, and 374 to 394; these read GWGW…FGVL, VSWI…IGSA, PVVM…SFAT, LYLS…TPTL, LAMG…APLF, LLLV…LRPL, VALT…VAHL, LGWD…SDLV, LLML…VAQA, VLAV…FSVI, IYCG…LGAP, and FVVA…LPHF. At 395–428 the chain is on the cytoplasmic side; sequence FSCISLSTSRPQDLVIEAPDTKIPLPKEEGLGEN.

The protein belongs to the major facilitator superfamily. Monocarboxylate porter (TC 2.A.1.13) family.

It localises to the golgi apparatus membrane. The protein localises to the cell membrane. Functionally, proton-linked monocarboxylate transporter. May catalyze the transport of monocarboxylates across the plasma membrane. The protein is Monocarboxylate transporter 13 (Slc16a13) of Rattus norvegicus (Rat).